Reading from the N-terminus, the 452-residue chain is 1,3-beta-glucanosyltransferase gel1 (452 aa).

The N-terminal stretch at 1-19 (MKASAVTAALAVGASTVLA) is a signal peptide. Cys-71 and Cys-100 form a disulfide bridge. 5 residues coordinate (1,3-beta-D-glucosyl)n: Tyr-89, Asn-159, Glu-160, Asp-201, and Arg-206. Glu-160 (proton donor) is an active-site residue. Disulfide bonds link Cys-215–Cys-345 and Cys-233–Cys-264. Residue Asn-249 is glycosylated (N-linked (GlcNAc...) asparagine). The Nucleophile role is filled by Glu-261. Tyr-292 is a (1,3-beta-D-glucosyl)n binding site. Polar residues predominate over residues 325–340 (EKTSNPSGDGNYNKTG). Residues 325 to 419 (EKTSNPSGDG…SGTSTSSKGA (95 aa)) are disordered. N-linked (GlcNAc...) asparagine glycosylation occurs at Asn-337. A compositionally biased stretch (low complexity) spans 393–419 (STATAEPGSGSATGSSSSGTSTSSKGA). A lipid anchor (GPI-like-anchor amidated alanine) is attached at Ala-419. Positions 420–452 (AAGLTVPSLTMAPVVVGAVTLLSTVFGAGLVLL) are cleaved as a propeptide — removed in mature form.

The protein belongs to the glycosyl hydrolase 72 family. Post-translationally, the GPI-like anchor contains a phosphoceramide lipid group. The anchor position has not been determined.

Its subcellular location is the cell membrane. Its function is as follows. Splits internally a 1,3-beta-glucan molecule and transfers the newly generated reducing end (the donor) to the non-reducing end of another 1,3-beta-glucan molecule (the acceptor) forming a 1,3-beta linkage, resulting in the elongation of 1,3-beta-glucan chains in the cell wall. Involved in cell wall morphogenesis. The chain is 1,3-beta-glucanosyltransferase gel1 (gel1) from Aspergillus fumigatus (strain CBS 144.89 / FGSC A1163 / CEA10) (Neosartorya fumigata).